Here is a 210-residue protein sequence, read N- to C-terminus: Signal peptidase complex catalytic subunit SEC11 (210 aa).

Residues 1–21 lie on the Cytoplasmic side of the membrane; it reads MLAGLSPHLSNLRRSLTQVLN. A helical; Signal-anchor for type II membrane protein transmembrane segment spans residues 22 to 38; sequence FALVLSTAFMMWKGLSI. The Lumenal portion of the chain corresponds to 39-210; it reads YTNSSSPIVV…MGAMVILQRE (172 aa). Residue asparagine 41 is glycosylated (N-linked (GlcNAc...) asparagine). Residues serine 53, histidine 92, and aspartate 152 each act as charge relay system in the active site. Residues 196–207 are C-terminal short (CTS) helix; the sequence is VLLGIMGAMVIL.

Belongs to the peptidase S26B family. In terms of assembly, component of the signal peptidase complex (SPC) composed of a catalytic subunit SEC11 and three accessory subunits SPC1, SPC2 and SPC3. The complex induces a local thinning of the ER membrane which is used to measure the length of the signal peptide (SP) h-region of protein substrates. This ensures the selectivity of the complex towards h-regions shorter than 18-20 amino acids. SPC associates with the translocon complex.

The protein resides in the endoplasmic reticulum membrane. The enzyme catalyses Cleavage of hydrophobic, N-terminal signal or leader sequences from secreted and periplasmic proteins.. Functionally, catalytic component of the signal peptidase complex (SPC) which catalyzes the cleavage of N-terminal signal sequences from nascent proteins as they are translocated into the lumen of the endoplasmic reticulum. Specifically cleaves N-terminal signal peptides that contain a hydrophobic alpha-helix (h-region) shorter than 18-20 amino acids. The sequence is that of Signal peptidase complex catalytic subunit SEC11 (SEC11) from Coccidioides posadasii (strain RMSCC 757 / Silveira) (Valley fever fungus).